A 56-amino-acid polypeptide reads, in one-letter code: Preprotein translocase subunit SecG (56 aa).

The Cytoplasmic portion of the chain corresponds to 1–29 (MAKEKATLPPTGAGLMRFFDEDTKAVKIS). Residues 30-51 (PRGVIALTLILVALEILLHAFG) form a helical membrane-spanning segment. Residues 52–56 (PQIFG) lie on the Extracellular side of the membrane.

Belongs to the SEC61-beta family. In terms of assembly, component of the protein translocase complex. Heterotrimer consisting of alpha (SecY), beta (SecG) and gamma (SecE) subunits. Can form oligomers of the heterotrimer.

Its subcellular location is the cell membrane. Functionally, involved in protein export. The function of the beta subunit is unknown, but it may be involved in stabilization of the trimeric complex. The chain is Preprotein translocase subunit SecG from Thermococcus onnurineus (strain NA1).